The following is a 245-amino-acid chain: UDP-2,3-diacylglucosamine hydrolase (245 aa).

Positions 8, 10, 41, 79, and 114 each coordinate Mn(2+). A substrate-binding site is contributed by 79–80; it reads NR. Residues aspartate 122, serine 160, lysine 164, lysine 167, and histidine 195 each contribute to the substrate site. Histidine 195 and histidine 197 together coordinate Mn(2+).

Belongs to the LpxH family. Mn(2+) is required as a cofactor.

The protein localises to the cell inner membrane. The catalysed reaction is UDP-2-N,3-O-bis[(3R)-3-hydroxytetradecanoyl]-alpha-D-glucosamine + H2O = 2-N,3-O-bis[(3R)-3-hydroxytetradecanoyl]-alpha-D-glucosaminyl 1-phosphate + UMP + 2 H(+). Its pathway is glycolipid biosynthesis; lipid IV(A) biosynthesis; lipid IV(A) from (3R)-3-hydroxytetradecanoyl-[acyl-carrier-protein] and UDP-N-acetyl-alpha-D-glucosamine: step 4/6. Hydrolyzes the pyrophosphate bond of UDP-2,3-diacylglucosamine to yield 2,3-diacylglucosamine 1-phosphate (lipid X) and UMP by catalyzing the attack of water at the alpha-P atom. Involved in the biosynthesis of lipid A, a phosphorylated glycolipid that anchors the lipopolysaccharide to the outer membrane of the cell. This is UDP-2,3-diacylglucosamine hydrolase from Aromatoleum aromaticum (strain DSM 19018 / LMG 30748 / EbN1) (Azoarcus sp. (strain EbN1)).